A 69-amino-acid chain; its full sequence is U-scoloptoxin(21)-Sm2a (69 aa).

An N-terminal signal peptide occupies residues 1–21; sequence MFFLGFIIVCASEEQSDNRLP. The disordered stretch occupies residues 46–69; it reads ANDPNGPGRRRRSPIVREEILRHP. Positions 60–69 are enriched in basic and acidic residues; it reads IVREEILRHP.

The protein belongs to the scoloptoxin-21 family. As to expression, expressed by the venom gland.

The protein localises to the secreted. The sequence is that of U-scoloptoxin(21)-Sm2a from Scolopendra morsitans (Tanzanian blue ringleg centipede).